A 394-amino-acid chain; its full sequence is MSARNILVINCGSSSIKFALVNEAQEQFPLSGLAERLGSPEAILHWQQGDERDSLVIAGADHRLALSHLLPIVQRVAAGELHGIGHRVVHGGEYFSGASRLDAVSLQAIRQVAPLAPLHNPANLLGIEAAMKLFPTLTQVAVFDTAFHQSLPEHAYRYAVPEALYREHGVRRYGFHGTSHRYVSQKAAQMAGLPADASSWLVAHLGNGCSTCAVENGHSRDTSMGLTPLEGLVMGTRSGDVDPNLHSHLARTLGWSLEQIDSMLNKDSGLLGLSGLSNDMRSLEQAREQGHAGATLAIEVFCYRLAKSLAAMSCALRRLDGLIFTGGIGENSALIRSKTLEHLGLLGFALDPAANARCVRGVGGPIQAAHGPLVLVVPTNEERQIALDTLALLD.

Asn10 contacts Mg(2+). Lys17 is a binding site for ATP. Substrate is bound at residue Arg87. Catalysis depends on Asp144, which acts as the Proton donor/acceptor. ATP contacts are provided by residues 204–208, 279–281, and 327–331; these read HLGNG, DMR, and GIGEN. A Mg(2+)-binding site is contributed by Glu381.

It belongs to the acetokinase family. In terms of assembly, homodimer. The cofactor is Mg(2+). Mn(2+) serves as cofactor.

It is found in the cytoplasm. The catalysed reaction is acetate + ATP = acetyl phosphate + ADP. It participates in metabolic intermediate biosynthesis; acetyl-CoA biosynthesis; acetyl-CoA from acetate: step 1/2. Functionally, catalyzes the formation of acetyl phosphate from acetate and ATP. Can also catalyze the reverse reaction. This is Acetate kinase from Ectopseudomonas mendocina (strain ymp) (Pseudomonas mendocina).